The sequence spans 734 residues: Photosystem I P700 chlorophyll a apoprotein A2 (734 aa).

The next 8 helical transmembrane spans lie at 46 to 69, 135 to 158, 175 to 199, 273 to 291, 330 to 353, 369 to 395, 417 to 439, and 517 to 535; these read IFAS…FHVA, LYTG…LHLQ, LNHH…HVAI, IAHH…GHMY, IHFQ…QHMY, AALY…IFFI, AIIS…LYVH, and FLVH…LILV. Residues Cys559 and Cys568 each coordinate [4Fe-4S] cluster. 2 helical membrane-spanning segments follow: residues 575–596 and 643–665; these read AFYL…YWHW and LSVW…MFLI. 3 residues coordinate chlorophyll a: His654, Met662, and Tyr670. Residue Trp671 coordinates phylloquinone. A helical transmembrane segment spans residues 707 to 727; the sequence is LVGLAHFSVGYIFTYAAFLIA.

Belongs to the PsaA/PsaB family. As to quaternary structure, the PsaA/B heterodimer binds the P700 chlorophyll special pair and subsequent electron acceptors. PSI consists of a core antenna complex that captures photons, and an electron transfer chain that converts photonic excitation into a charge separation. The eukaryotic PSI reaction center is composed of at least 11 subunits. The cofactor is P700 is a chlorophyll a/chlorophyll a' dimer, A0 is one or more chlorophyll a, A1 is one or both phylloquinones and FX is a shared 4Fe-4S iron-sulfur center..

It is found in the plastid. It localises to the chloroplast thylakoid membrane. It carries out the reaction reduced [plastocyanin] + hnu + oxidized [2Fe-2S]-[ferredoxin] = oxidized [plastocyanin] + reduced [2Fe-2S]-[ferredoxin]. In terms of biological role, psaA and PsaB bind P700, the primary electron donor of photosystem I (PSI), as well as the electron acceptors A0, A1 and FX. PSI is a plastocyanin-ferredoxin oxidoreductase, converting photonic excitation into a charge separation, which transfers an electron from the donor P700 chlorophyll pair to the spectroscopically characterized acceptors A0, A1, FX, FA and FB in turn. Oxidized P700 is reduced on the lumenal side of the thylakoid membrane by plastocyanin. The protein is Photosystem I P700 chlorophyll a apoprotein A2 of Phaseolus vulgaris (Kidney bean).